The following is a 244-amino-acid chain: Small ribosomal subunit protein eS6 (244 aa).

The tract at residues 185-244 (RLQRKRHMRAVKRRRYAKQREEEATYAKLLAKRKKEEREAHAKRRSSARESSLRESKSKA) is disordered. The span at 186-201 (LQRKRHMRAVKRRRYA) shows a compositional bias: basic residues. Positions 231–244 (SARESSLRESKSKA) are enriched in basic and acidic residues.

This sequence belongs to the eukaryotic ribosomal protein eS6 family. Ribosomal protein S6 is the major substrate of protein kinases in eukaryote ribosomes.

Its function is as follows. Component of the 40S small ribosomal subunit. Plays an important role in controlling cell growth and proliferation through the selective translation of particular classes of mRNA. The protein is Small ribosomal subunit protein eS6 (RPS6) of Branchiostoma floridae (Florida lancelet).